A 999-amino-acid polypeptide reads, in one-letter code: Bifunctional glutamine synthetase adenylyltransferase/adenylyl-removing enzyme (999 aa).

Positions 1–483 (MTPGRRSSTF…LHEKLFYRPL (483 aa)) are adenylyl removase. The interval 489-999 (QLAPGEARLS…RTVVEDLFYA (511 aa)) is adenylyl transferase.

It belongs to the GlnE family. Mg(2+) serves as cofactor.

The enzyme catalyses [glutamine synthetase]-O(4)-(5'-adenylyl)-L-tyrosine + phosphate = [glutamine synthetase]-L-tyrosine + ADP. The catalysed reaction is [glutamine synthetase]-L-tyrosine + ATP = [glutamine synthetase]-O(4)-(5'-adenylyl)-L-tyrosine + diphosphate. Adenylation and deadenylation of glutamate--ammonia ligase. Its function is as follows. Involved in the regulation of glutamine synthetase GlnA, a key enzyme in the process to assimilate ammonia. When cellular nitrogen levels are high, the C-terminal adenylyl transferase (AT) inactivates GlnA by covalent transfer of an adenylyl group from ATP to specific tyrosine residue of GlnA, thus reducing its activity. Conversely, when nitrogen levels are low, the N-terminal adenylyl removase (AR) activates GlnA by removing the adenylyl group by phosphorolysis, increasing its activity. The regulatory region of GlnE binds the signal transduction protein PII (GlnB) which indicates the nitrogen status of the cell. The chain is Bifunctional glutamine synthetase adenylyltransferase/adenylyl-removing enzyme from Streptomyces coelicolor (strain ATCC BAA-471 / A3(2) / M145).